The primary structure comprises 198 residues: Ribonuclease HII (198 aa).

In terms of domain architecture, RNase H type-2 spans 10–198; it reads HLVAGVDEVG…PVKRALGLVS (189 aa). A divalent metal cation is bound by residues aspartate 16, glutamate 17, and aspartate 108.

The protein belongs to the RNase HII family. Requires Mn(2+) as cofactor. The cofactor is Mg(2+).

The protein localises to the cytoplasm. It carries out the reaction Endonucleolytic cleavage to 5'-phosphomonoester.. In terms of biological role, endonuclease that specifically degrades the RNA of RNA-DNA hybrids. In Salmonella paratyphi A (strain AKU_12601), this protein is Ribonuclease HII.